The sequence spans 419 residues: Histidine--tRNA ligase (419 aa).

Belongs to the class-II aminoacyl-tRNA synthetase family. Homodimer.

The protein resides in the cytoplasm. The enzyme catalyses tRNA(His) + L-histidine + ATP = L-histidyl-tRNA(His) + AMP + diphosphate + H(+). The chain is Histidine--tRNA ligase from Novosphingobium aromaticivorans (strain ATCC 700278 / DSM 12444 / CCUG 56034 / CIP 105152 / NBRC 16084 / F199).